The chain runs to 313 residues: E3 ubiquitin-protein ligase RNF126 (313 aa).

At Ala2 the chain carries N-acetylalanine. Ser5 is modified (phosphoserine). The tract at residues 5–100 (SPQPGRYFCH…FEIPTFPPGA (96 aa)) is required for interaction with BAG6. Zn(2+) contacts are provided by Cys13, Cys16, Cys29, and Cys32. Residues 13 to 32 (CHCCSVEIVPRLPDYICPRC) form a C4-type zinc finger. 2 disordered regions span residues 42–63 (EETRNTENGSAPSTAPTDQNRQ) and 95–128 (TFPPGAQADDGRDPESRREREHQSRHRYGARQPR). Positions 47 to 63 (TENGSAPSTAPTDQNRQ) are enriched in polar residues. A compositionally biased stretch (basic and acidic residues) spans 103-116 (DDGRDPESRREREH). A compositionally biased stretch (basic residues) spans 117–128 (QSRHRYGARQPR). Residues 202-306 (TGPPPADKEK…SSSSSSSPSN (105 aa)) form a sufficient for interaction with AICDA region. The RING-type zinc finger occupies 231 to 272 (CPVCKEDYALGESVRQLPCNHLFHDSCIVPWLEQHDSCPVCR). Residues 279-313 (NTATNPPGLTGVGFSSSSSSSSSSSPSNENATSNS) are disordered. Low complexity predominate over residues 293 to 313 (SSSSSSSSSSSPSNENATSNS).

In terms of assembly, interacts with CCDC50, EGFR, FLT3 and SCAMP3. Interacts with BAG6 (via ubiquitin-like domain); required for BAG6-dependent ubiquitination of proteins mislocalized to the cytosol. Interacts with CDKN1A. Interacts with AICDA. Post-translationally, ubiquitinated. May undergo autoubiquitination. In terms of tissue distribution, detected in B-cells (at protein level).

It is found in the cytoplasm. The protein localises to the nucleus. The catalysed reaction is S-ubiquitinyl-[E2 ubiquitin-conjugating enzyme]-L-cysteine + [acceptor protein]-L-lysine = [E2 ubiquitin-conjugating enzyme]-L-cysteine + N(6)-ubiquitinyl-[acceptor protein]-L-lysine.. It functions in the pathway protein modification; protein ubiquitination. In terms of biological role, E3 ubiquitin-protein ligase that mediates ubiquitination oF target proteins. Depending on the associated E2 ligase, mediates 'Lys-27'-, 'Lys-29'-, 'Lys-48'- and/or 'Lys-63'-linked polyubiquitination of substrates. Part of a BAG6-dependent quality control process ensuring that proteins of the secretory pathway that are mislocalized to the cytosol are degraded by the proteasome. Probably acts by providing the ubiquitin ligase activity associated with the BAG6 complex and be responsible for ubiquitination of the hydrophobic mislocalized proteins and their targeting to the proteasome. May also play a role in the endosomal recycling of IGF2R, the cation-independent mannose-6-phosphate receptor. May play a role in the endosomal sorting and degradation of several membrane receptors including EGFR, FLT3, MET and CXCR4, by mediating their ubiquitination. By ubiquitinating CDKN1A/p21 and targeting it for degradation, may also promote cell proliferation. May monoubiquitinate AICDA. Acts as a regulator of DNA repair by mediating 'Lys-27'- and 'Lys-29'-linked polyubiquitination of MRE11, thereby promoting the exonuclease activity of MRE11. This is E3 ubiquitin-protein ligase RNF126 from Mus musculus (Mouse).